Consider the following 315-residue polypeptide: Calumenin (315 aa).

Positions 1 to 19 are cleaved as a signal peptide; that stretch reads MDLRQFLMCLSLCTAFALS. Ser-44 carries the phosphoserine modification. Tyr-47 carries the post-translational modification Phosphotyrosine. Residue Thr-65 is modified to Phosphothreonine. EF-hand domains follow at residues 68-103, 104-139, 151-186, 188-223, 229-264, and 265-300; these read ESKE…AQKR, WIYE…YVLD, QMMV…EEYD, MKDI…HDGN, WVKT…SDYD, and HAEA…FVGS. Ser-69 carries the phosphoserine; by FAM20C modification. Ca(2+) is bound by residues Asp-81, Asp-83, Asp-85, Glu-92, Asp-117, Asn-119, Asp-121, and Glu-128. Residue Asn-131 is glycosylated (N-linked (GlcNAc...) (complex) asparagine). Asp-164 contacts Ca(2+). Lys-165 bears the N6-acetyllysine mark. The Ca(2+) site is built by Asp-166, Asp-168, Glu-175, Asp-201, Asn-203, Asp-205, Glu-212, Asp-242, Asn-244, Asp-246, Lys-248, and Glu-253. At Thr-254 the chain carries Phosphothreonine. 2 positions are modified to phosphoserine: Ser-261 and Ser-277. Ca(2+) is bound by residues Asp-278, Asn-280, Asp-282, Lys-284, and Glu-289. Positions 312–315 match the Prevents secretion from ER motif; sequence HDEF.

This sequence belongs to the CREC family. As to quaternary structure, interacts with GGCX. In terms of tissue distribution, ubiquitously expressed. Expressed at high levels in heart, placenta and skeletal muscle, at lower levels in lung, kidney and pancreas and at very low levels in brain and liver.

It is found in the endoplasmic reticulum membrane. Its subcellular location is the golgi apparatus. The protein localises to the secreted. It localises to the melanosome. The protein resides in the sarcoplasmic reticulum lumen. In terms of biological role, involved in regulation of vitamin K-dependent carboxylation of multiple N-terminal glutamate residues. Seems to inhibit gamma-carboxylase GGCX. Binds 7 calcium ions with a low affinity. The protein is Calumenin (CALU) of Homo sapiens (Human).